We begin with the raw amino-acid sequence, 193 residues long: Lipid A acyltransferase PagP (193 aa).

The N-terminal stretch at 1 to 32 (MNGMAVVMIIRKYFLIIALLVMPWLAIPSVSA) is a signal peptide. Residues histidine 65, aspartate 108, and serine 109 contribute to the active site.

Belongs to the lipid A palmitoyltransferase family. As to quaternary structure, homodimer.

The protein resides in the cell outer membrane. It carries out the reaction a lipid A + a 1,2-diacyl-sn-glycero-3-phosphocholine = a hepta-acyl lipid A + a 2-acyl-sn-glycero-3-phosphocholine. The catalysed reaction is a lipid IVA + a 1,2-diacyl-sn-glycero-3-phosphocholine = a lipid IVB + a 2-acyl-sn-glycero-3-phosphocholine. The enzyme catalyses a lipid IIA + a 1,2-diacyl-sn-glycero-3-phosphocholine = a lipid IIB + a 2-acyl-sn-glycero-3-phosphocholine. In terms of biological role, transfers a fatty acid residue from the sn-1 position of a phospholipid to the N-linked hydroxyfatty acid chain on the proximal unit of lipid A or its precursors. The protein is Lipid A acyltransferase PagP of Salmonella paratyphi C (strain RKS4594).